Consider the following 475-residue polypeptide: Ribulose bisphosphate carboxylase large chain (475 aa).

A propeptide spanning residues 1–2 (MS) is cleaved from the precursor. An N-acetylproline modification is found at Pro-3. Lys-14 carries the post-translational modification N6,N6,N6-trimethyllysine. The substrate site is built by Asn-123 and Thr-173. The active-site Proton acceptor is Lys-175. Residue Lys-177 coordinates substrate. Residues Lys-201, Asp-203, and Glu-204 each contribute to the Mg(2+) site. Lys-201 carries the post-translational modification N6-carboxylysine. His-294 functions as the Proton acceptor in the catalytic mechanism. Residues Arg-295, His-327, and Ser-379 each contribute to the substrate site.

The protein belongs to the RuBisCO large chain family. Type I subfamily. As to quaternary structure, heterohexadecamer of 8 large chains and 8 small chains; disulfide-linked. The disulfide link is formed within the large subunit homodimers. It depends on Mg(2+) as a cofactor. Post-translationally, the disulfide bond which can form in the large chain dimeric partners within the hexadecamer appears to be associated with oxidative stress and protein turnover.

Its subcellular location is the plastid. The protein localises to the chloroplast. The catalysed reaction is 2 (2R)-3-phosphoglycerate + 2 H(+) = D-ribulose 1,5-bisphosphate + CO2 + H2O. It catalyses the reaction D-ribulose 1,5-bisphosphate + O2 = 2-phosphoglycolate + (2R)-3-phosphoglycerate + 2 H(+). In terms of biological role, ruBisCO catalyzes two reactions: the carboxylation of D-ribulose 1,5-bisphosphate, the primary event in carbon dioxide fixation, as well as the oxidative fragmentation of the pentose substrate in the photorespiration process. Both reactions occur simultaneously and in competition at the same active site. The sequence is that of Ribulose bisphosphate carboxylase large chain from Eucalyptus globulus subsp. globulus (Tasmanian blue gum).